We begin with the raw amino-acid sequence, 204 residues long: 3-isopropylmalate dehydratase small subunit (204 aa).

Belongs to the LeuD family. LeuD type 1 subfamily. As to quaternary structure, heterodimer of LeuC and LeuD.

The catalysed reaction is (2R,3S)-3-isopropylmalate = (2S)-2-isopropylmalate. It participates in amino-acid biosynthesis; L-leucine biosynthesis; L-leucine from 3-methyl-2-oxobutanoate: step 2/4. Its function is as follows. Catalyzes the isomerization between 2-isopropylmalate and 3-isopropylmalate, via the formation of 2-isopropylmaleate. In Roseiflexus castenholzii (strain DSM 13941 / HLO8), this protein is 3-isopropylmalate dehydratase small subunit.